A 182-amino-acid chain; its full sequence is MKNSIIKSAITCLLLLSPSTFAATDIIGGEMEFKGVVVAHGCTIVAGDENKVIDFKQISAKDLYSLQKSNPVAFSISLENCSQDIYKSVTITLDGQAHSTMPNHIAVTGSGSEDPKSIGIAFTDKAHNIIELKKPSAPQQLNNKRVQFNFMAYVEATSSAIQNQTILTGPFQAQATYTLNYQ.

An N-terminal signal peptide occupies residues 1 to 22 (MKNSIIKSAITCLLLLSPSTFA).

Belongs to the fimbrial protein family.

Its subcellular location is the fimbrium. The chain is Putative minor fimbrial subunit PmfF (pmfF) from Proteus mirabilis (strain HI4320).